We begin with the raw amino-acid sequence, 116 residues long: Spexin (116 aa).

The signal sequence occupies residues 1 to 26; it reads MKGLRSLAATTLALFLVFVFLGNSSC. A propeptide spanning residues 27–35 is cleaved from the precursor; it reads APQRLLERR. Position 49 is a glutamine amide (Gln49). Propeptides lie at residues 50–116 and 74–116; these read GRRF…LLNW and PNPQ…LLNW. Over residues 55–73 the composition is skewed to basic and acidic residues; that stretch reads SDQSRRKDLSDRPLPERRS. Residues 55–77 form a disordered region; it reads SDQSRRKDLSDRPLPERRSPNPQ.

This sequence belongs to the spexin family. Expressed in the type I glomic cells within the carotid body (at protein level). Expressed predominantly in pancreas, testis, kidney, brain and placenta. Expressed in submucosal layer of esophagus and stomach fundus.

The protein resides in the secreted. It localises to the extracellular space. It is found in the cytoplasmic vesicle. The protein localises to the secretory vesicle. Functionally, plays a role as a central modulator of cardiovascular and renal function and nociception. Also plays a role in energy metabolism and storage. Inhibits adrenocortical cell proliferation with minor stimulation on corticosteroid release. Its function is as follows. Acts as a ligand for galanin receptors GALR2 and GALR3. Intracerebroventricular administration of the peptide induces an increase in arterial blood pressure, a decrease in both heart rate and renal excretion and delayed natriuresis. Intraventricular administration of the peptide induces antinociceptive activity. Also induces contraction of muscarinic-like stomach smooth muscles. Intraperitoneal administration of the peptide induces a reduction in food consumption and body weight. Inhibits long chain fatty acid uptake into adipocytes. Intracerebroventricular administration of the peptide induces a decrease in heart rate, but no change in arterial pressure, and an increase in urine flow rate. Intraventricular administration of the peptide induces antinociceptive activity. The sequence is that of Spexin (SPX) from Homo sapiens (Human).